Reading from the N-terminus, the 530-residue chain is Probable flavin-containing monooxygenase 1 (530 aa).

FAD contacts are provided by residues 17–21 (GAGVS), Glu38, 46–47 (VW), and 58–59 (QS). Position 219-222 (219-222 (SAID)) interacts with NADP(+).

This sequence belongs to the FMO family. It depends on FAD as a cofactor.

Functionally, required for the establishment of systemic acquired resistance (SAR). Not involved in local defense mechanisms. Confers a salicylic acid-dependent (SA) resistance to virulent pathogens such as P.syringae pv tomato and H.parasitica. This chain is Probable flavin-containing monooxygenase 1 (FMO1), found in Arabidopsis thaliana (Mouse-ear cress).